We begin with the raw amino-acid sequence, 313 residues long: tRNA dimethylallyltransferase (313 aa).

11–18 (GPTACGKT) provides a ligand contact to ATP. 13–18 (TACGKT) contacts substrate. Interaction with substrate tRNA stretches follow at residues 36–39 (DSAL), 160–164 (QRIGR), and 243–248 (RCVGYR).

The protein belongs to the IPP transferase family. In terms of assembly, monomer. The cofactor is Mg(2+).

It catalyses the reaction adenosine(37) in tRNA + dimethylallyl diphosphate = N(6)-dimethylallyladenosine(37) in tRNA + diphosphate. Its function is as follows. Catalyzes the transfer of a dimethylallyl group onto the adenine at position 37 in tRNAs that read codons beginning with uridine, leading to the formation of N6-(dimethylallyl)adenosine (i(6)A). This chain is tRNA dimethylallyltransferase, found in Neisseria gonorrhoeae (strain ATCC 700825 / FA 1090).